A 242-amino-acid polypeptide reads, in one-letter code: ATP synthase subunit a (242 aa).

6 helical membrane passes run 29-49 (SAVA…IAFV), 83-103 (VFFP…IIGM), 114-134 (IIVT…YGIY), 140-160 (FFSL…MVII), 181-201 (VAGH…TWFF), and 206-226 (IALV…QAYI).

Belongs to the ATPase A chain family. As to quaternary structure, F-type ATPases have 2 components, CF(1) - the catalytic core - and CF(0) - the membrane proton channel. CF(1) has five subunits: alpha(3), beta(3), gamma(1), delta(1), epsilon(1). CF(0) has three main subunits: a(1), b(2) and c(9-12). The alpha and beta chains form an alternating ring which encloses part of the gamma chain. CF(1) is attached to CF(0) by a central stalk formed by the gamma and epsilon chains, while a peripheral stalk is formed by the delta and b chains.

It localises to the cell inner membrane. In terms of biological role, key component of the proton channel; it plays a direct role in the translocation of protons across the membrane. This Orientia tsutsugamushi (strain Boryong) (Rickettsia tsutsugamushi) protein is ATP synthase subunit a.